The chain runs to 1171 residues: ATP-dependent helicase/deoxyribonuclease subunit B (1171 aa).

The protein belongs to the helicase family. AddB/RexB type 2 subfamily. In terms of assembly, heterodimer of AddA and RexB. Mg(2+) serves as cofactor.

In terms of biological role, the heterodimer acts as both an ATP-dependent DNA helicase and an ATP-dependent, dual-direction single-stranded exonuclease. Recognizes the chi site generating a DNA molecule suitable for the initiation of homologous recombination. This subunit has 5' -&gt; 3' nuclease activity but not helicase activity. The polypeptide is ATP-dependent helicase/deoxyribonuclease subunit B (Leuconostoc citreum (strain KM20)).